A 557-amino-acid polypeptide reads, in one-letter code: Low affinity inorganic phosphate transporter 8 (557 aa).

At 1–20 the chain is on the cytoplasmic side; the sequence is MATSHGVLRSLDNAKTQSYH. The helical transmembrane segment at 21-41 threads the bilayer; sequence YLAIVIAGMGFFTDAYDLFCI. Topologically, residues 42–70 are extracellular; sequence TAVTKLIGRLYYSDPTNHSPGILPTNVNN. The chain crosses the membrane as a helical span at residues 71–91; it reads AITGVALCGTLAGQLFFGWLG. Over 92 to 98 the chain is Cytoplasmic; sequence DKLGRKK. A helical transmembrane segment spans residues 99 to 119; it reads VYGITLTTMVGFALLSGLSFG. Over 120–130 the chain is Extracellular; that stretch reads STPKTVVTSLC. Residues 131-151 traverse the membrane as a helical segment; the sequence is FFRFWLGFGIGGDYPLSAVIM. At 152–162 the chain is on the cytoplasmic side; it reads SEYANQKTRGS. A helical transmembrane segment spans residues 163–183; that stretch reads FIAAVFAMQGVGILVAGGVAM. Over 184–210 the chain is Extracellular; sequence FVSKLFLLYFPAPDFETDAVLSTQPEG. The helical transmembrane segment at 211-231 threads the bilayer; the sequence is DFVWRIVLMFGAVPAALTYYW. The Cytoplasmic portion of the chain corresponds to 232–294; the sequence is RMKMPETARY…LFSSEFLNRH (63 aa). A helical membrane pass occupies residues 295–315; that stretch reads GLHLLGTTSTWFLLDIAFYSL. Residues 316-346 lie on the Extracellular side of the membrane; the sequence is QLTQKDIYPTSGLVYKASKMNAIEEVFQLSR. The chain crosses the membrane as a helical span at residues 347 to 367; that stretch reads AMFAVALIATVPGYWCTVFLI. Residues 368-369 lie on the Cytoplasmic side of the membrane; it reads EK. The helical transmembrane segment at 370–390 threads the bilayer; that stretch reads IGRFRIQLIGFLVMSVCMWFL. Topologically, residues 391 to 414 are extracellular; it reads GHNYRSFRGEESACKNGSKYSFCN. N-linked (GlcNAc...) asparagine glycosylation occurs at Asn406. Residues 415–435 form a helical membrane-spanning segment; sequence GNPVMFAILFGLTLFFANFGP. Topologically, residues 436 to 457 are cytoplasmic; sequence NSTTFIVPAELFPARLRSTCHG. A helical transmembrane segment spans residues 458 to 478; it reads ISAAAGKSGAIVGAFGVQSYI. The Extracellular segment spans residues 479 to 490; sequence GNSHDKSKGTKQ. Residues 491–511 traverse the membrane as a helical segment; that stretch reads AIMALAVVNLLGFFFTFLVPE. The Cytoplasmic portion of the chain corresponds to 512–557; that stretch reads TQGRSLEEISGEEKDFQGNNADEEISGERNGTRNASVDKSPETSMV. The segment at 519–557 is disordered; sequence EISGEEKDFQGNNADEEISGERNGTRNASVDKSPETSMV. Residues 543-557 show a composition bias toward polar residues; that stretch reads TRNASVDKSPETSMV.

This sequence belongs to the major facilitator superfamily. Phosphate:H(+) symporter (TC 2.A.1.9) family.

It localises to the cell membrane. It carries out the reaction phosphate(in) + H(+)(in) = phosphate(out) + H(+)(out). Low-affinity transporter for external inorganic phosphate (Pi) that may be involved in the acquisition of phosphate released by arbuscular mycorrhizal (AM) fungi (e.g. Glomus versiforme and G.intraradices) during AM symbiosis; not required for mycorrhizal arbuscule development. The protein is Low affinity inorganic phosphate transporter 8 of Medicago truncatula (Barrel medic).